A 340-amino-acid polypeptide reads, in one-letter code: Probable glucan endo-1,3-beta-glucosidase BG1 (340 aa).

Positions 1 to 25 (MDLRFLASLTLLLGLFFVNTNPTGG) are cleaved as a signal peptide. The Proton donor role is filled by Glu-120. Glu-262 acts as the Nucleophile in catalysis.

This sequence belongs to the glycosyl hydrolase 17 family.

It localises to the secreted. It carries out the reaction Hydrolysis of (1-&gt;3)-beta-D-glucosidic linkages in (1-&gt;3)-beta-D-glucans.. In terms of biological role, may play a role in plant defense against pathogens. The chain is Probable glucan endo-1,3-beta-glucosidase BG1 from Arabidopsis thaliana (Mouse-ear cress).